A 160-amino-acid polypeptide reads, in one-letter code: Nucleotide-binding protein VF_1240 (160 aa).

The protein belongs to the YajQ family.

Its function is as follows. Nucleotide-binding protein. This Aliivibrio fischeri (strain ATCC 700601 / ES114) (Vibrio fischeri) protein is Nucleotide-binding protein VF_1240.